A 299-amino-acid polypeptide reads, in one-letter code: Epimerase family protein SERP0438 (299 aa).

It belongs to the NAD(P)-dependent epimerase/dehydratase family. SDR39U1 subfamily.

This is Epimerase family protein SERP0438 from Staphylococcus epidermidis (strain ATCC 35984 / DSM 28319 / BCRC 17069 / CCUG 31568 / BM 3577 / RP62A).